A 79-amino-acid polypeptide reads, in one-letter code: Conotoxin Vi6.4 (79 aa).

The N-terminal stretch at 1–22 (MKLTCVLIITVLFLTASQLITA) is a signal peptide. Residues 23–47 (DYSGDKRQYRAVRLRDEMRNFKGAR) constitute a propeptide that is removed on maturation. Cystine bridges form between Cys-49/Cys-62, Cys-56/Cys-67, and Cys-61/Cys-77. 2 positions are modified to 4-hydroxyproline: Pro-60 and Pro-63.

Belongs to the conotoxin O1 superfamily. Expressed by the venom duct.

It is found in the secreted. Functionally, ion channel inhibitor that inhibits the increase in intracellular calcium upon depolarization in DRG neurons. In vivo, both intraperitoneal and intracranial injections into mice induce hyperactivity. The protein is Conotoxin Vi6.4 of Conus virgo (Virgin cone).